The sequence spans 367 residues: Biotin synthase (367 aa).

A Radical SAM core domain is found at 73-308 (CCGNTVDLCS…EQIIRYAGGR (236 aa)). [4Fe-4S] cluster-binding residues include Cys91, Cys95, and Cys98. 4 residues coordinate [2Fe-2S] cluster: Cys136, Cys173, Cys233, and Arg303.

The protein belongs to the radical SAM superfamily. Biotin synthase family. In terms of assembly, homodimer. The cofactor is [4Fe-4S] cluster. It depends on [2Fe-2S] cluster as a cofactor.

It carries out the reaction (4R,5S)-dethiobiotin + (sulfur carrier)-SH + 2 reduced [2Fe-2S]-[ferredoxin] + 2 S-adenosyl-L-methionine = (sulfur carrier)-H + biotin + 2 5'-deoxyadenosine + 2 L-methionine + 2 oxidized [2Fe-2S]-[ferredoxin]. The protein operates within cofactor biosynthesis; biotin biosynthesis; biotin from 7,8-diaminononanoate: step 2/2. Its function is as follows. Catalyzes the conversion of dethiobiotin (DTB) to biotin by the insertion of a sulfur atom into dethiobiotin via a radical-based mechanism. The sequence is that of Biotin synthase from Picosynechococcus sp. (strain ATCC 27264 / PCC 7002 / PR-6) (Agmenellum quadruplicatum).